The chain runs to 246 residues: 4-aminobenzoate synthase (246 aa).

Fe(2+)-binding residues include Glu-88, His-95, Glu-149, His-181, Asp-185, and His-188.

It belongs to the CADD family. Homodimer. The cofactor is Fe(2+). Requires Mn(2+) as cofactor.

Functionally, involved in de novo para-aminobenzoate (PABA) biosynthesis. Acts as a self-sacrificing or 'suicide' enzyme that utilizes its own active site tyrosine residue(s) as the substrate for PABA synthesis. The side chain of the tyrosine residue is released from the protein backbone via cleavage of the C(alpha)-C(beta) bond, leaving a glycine in place of the original tyrosine residue. Reaction requires O(2) and a reduced dimetal cofactor. In Nitrosomonas europaea (strain ATCC 19718 / CIP 103999 / KCTC 2705 / NBRC 14298), this protein is 4-aminobenzoate synthase.